Consider the following 790-residue polypeptide: Pentatricopeptide repeat-containing protein OTP51, chloroplastic (790 aa).

Residues 1 to 56 constitute a chloroplast transit peptide; it reads MATTSPCAAPSPSLRCPLALSHPFASPPPPPALRLAGPKLLPGRLAVSPPPGIPAV. PPR repeat units follow at residues 182 to 216, 217 to 254, 256 to 296, 299 to 333, 334 to 368, 369 to 403, 404 to 438, 439 to 469, 473 to 507, and 509 to 543; these read NFALATRVADCLGRDGKVEKCREVFEAMVKQGRVP, AESTFHILIVAYLSVPKGRCLEEACTIYNQMIQMGGYK, RLSL…NLDV, DVYAGLIWLHSYQDVIDRERIIALRKEMKQAGFDE, GIDVLVSVMRAFSKEGNVAETEATWHNILQSGSDL, PVQAYVCRMEAYARTGEPMKSLDMFKEMKDKNIPP, NVASYHKIIEIMTKALEVDIVEQLMNEFIESDMKH, LMPAFLDLMYMYMDLDMHEKLELTFLKCIAR, NRILYTIYLESLVKVGNIEKAEEVFGEMHNNGMIG, and NTKSCNIMLRGYLSAEDYQKAEKVYDMMSKKKYDV. The tract at residues 762–790 is disordered; sequence GSSIGSDGTQDTDTDSDDDMQMSDTERDE. Acidic residues predominate over residues 771–790; that stretch reads QDTDTDSDDDMQMSDTERDE.

It belongs to the PPR family. P subfamily.

The protein resides in the plastid. It is found in the chloroplast. Promotes the splicing of group II introns in chloroplasts. Required for the splicing of intron 2 of plastid ycf3 transcripts, a factor required for the assembly of photosystem I (PSI). Involved in the splicing of atpF, ndhA, petB and rps16 chloroplastic transcripts. Required for the assembly of PSI. In Oryza sativa subsp. japonica (Rice), this protein is Pentatricopeptide repeat-containing protein OTP51, chloroplastic.